The following is a 202-amino-acid chain: Putative 3-methyladenine DNA glycosylase (202 aa).

The protein belongs to the DNA glycosylase MPG family.

This Clostridium botulinum (strain Alaska E43 / Type E3) protein is Putative 3-methyladenine DNA glycosylase.